We begin with the raw amino-acid sequence, 467 residues long: Gamma-aminobutyric acid receptor subunit gamma-3 (467 aa).

The first 17 residues, 1-17 (MAPKLLLLLCLFSGLHA), serve as a signal peptide directing secretion. Topologically, residues 18 to 256 (RSRKVEEDEY…FELSRRMGYF (239 aa)) are extracellular. A glycan (N-linked (GlcNAc...) asparagine) is linked at asparagine 110. Cysteine 171 and cysteine 185 form a disulfide bridge. A glycan (N-linked (GlcNAc...) asparagine) is linked at asparagine 228. The helical transmembrane segment at 257–277 (TIQTYIPCILTVVLSWVSFWI) threads the bilayer. Over 278–283 (KKDATP) the chain is Cytoplasmic. The helical transmembrane segment at 284-303 (ARTALGITTVLTMTTLSTIA) threads the bilayer. Residues 304 to 311 (RKSLPRVS) lie on the Extracellular side of the membrane. Residues 312 to 332 (YVTAMDLFVTVCFLFVFAALM) form a helical membrane-spanning segment. Topologically, residues 333–446 (EYATLNYYSS…DILELDSYSR (114 aa)) are cytoplasmic. A helical membrane pass occupies residues 447 to 467 (VFFPTSFLLFNLVYWVGYLYL).

Belongs to the ligand-gated ion channel (TC 1.A.9) family. Gamma-aminobutyric acid receptor (TC 1.A.9.5) subfamily. GABRG3 sub-subfamily. As to quaternary structure, heteropentamer, formed by a combination of alpha (GABRA1-6), beta (GABRB1-3), gamma (GABRG1-3), delta (GABRD), epsilon (GABRE), rho (GABRR1-3), pi (GABRP) and theta (GABRQ) chains, each subunit exhibiting distinct physiological and pharmacological properties. Post-translationally, may be palmitoylated. In terms of tissue distribution, expressed in brain.

It localises to the postsynaptic cell membrane. It is found in the cell membrane. It catalyses the reaction chloride(in) = chloride(out). In terms of biological role, gamma subunit of the heteropentameric ligand-gated chloride channel gated by gamma-aminobutyric acid (GABA), a major inhibitory neurotransmitter in the brain. GABA-gated chloride channels, also named GABA(A) receptors (GABAAR), consist of five subunits arranged around a central pore and contain GABA active binding site(s) located at the alpha and beta subunit interface(s). When activated by GABA, GABAARs selectively allow the flow of chloride across the cell membrane down their electrochemical gradient. The chain is Gamma-aminobutyric acid receptor subunit gamma-3 from Homo sapiens (Human).